Here is a 689-residue protein sequence, read N- to C-terminus: Armadillo-like helical domain-containing protein 3 (689 aa).

A helical membrane pass occupies residues 520–538 (IFTLTLMVVNLFNMFITYG).

The protein belongs to the ARMH3 family.

It localises to the golgi apparatus membrane. Its subcellular location is the cytoplasm. In terms of biological role, may be involved in Golgi maintenance and protein secretion. The chain is Armadillo-like helical domain-containing protein 3 from Xenopus laevis (African clawed frog).